The following is a 329-amino-acid chain: Beta-ketoacyl-[acyl-carrier-protein] synthase III (329 aa).

Catalysis depends on residues C123 and H256. Residues 257–261 (QANIR) are ACP-binding. The active site involves N286.

This sequence belongs to the thiolase-like superfamily. FabH family. In terms of assembly, homodimer.

The protein resides in the cytoplasm. The catalysed reaction is malonyl-[ACP] + acetyl-CoA + H(+) = 3-oxobutanoyl-[ACP] + CO2 + CoA. The protein operates within lipid metabolism; fatty acid biosynthesis. Catalyzes the condensation reaction of fatty acid synthesis by the addition to an acyl acceptor of two carbons from malonyl-ACP. Catalyzes the first condensation reaction which initiates fatty acid synthesis and may therefore play a role in governing the total rate of fatty acid production. Possesses both acetoacetyl-ACP synthase and acetyl transacylase activities. Its substrate specificity determines the biosynthesis of branched-chain and/or straight-chain of fatty acids. This is Beta-ketoacyl-[acyl-carrier-protein] synthase III from Paraburkholderia phymatum (strain DSM 17167 / CIP 108236 / LMG 21445 / STM815) (Burkholderia phymatum).